A 354-amino-acid polypeptide reads, in one-letter code: UDP-N-acetylglucosamine--N-acetylmuramyl-(pentapeptide) pyrophosphoryl-undecaprenol N-acetylglucosamine transferase (354 aa).

Residues 15–17 (TGG), asparagine 127, arginine 163, serine 191, isoleucine 244, 263–268 (ALTVSE), and glutamine 288 contribute to the UDP-N-acetyl-alpha-D-glucosamine site.

It belongs to the glycosyltransferase 28 family. MurG subfamily.

The protein localises to the cell inner membrane. The enzyme catalyses di-trans,octa-cis-undecaprenyl diphospho-N-acetyl-alpha-D-muramoyl-L-alanyl-D-glutamyl-meso-2,6-diaminopimeloyl-D-alanyl-D-alanine + UDP-N-acetyl-alpha-D-glucosamine = di-trans,octa-cis-undecaprenyl diphospho-[N-acetyl-alpha-D-glucosaminyl-(1-&gt;4)]-N-acetyl-alpha-D-muramoyl-L-alanyl-D-glutamyl-meso-2,6-diaminopimeloyl-D-alanyl-D-alanine + UDP + H(+). It functions in the pathway cell wall biogenesis; peptidoglycan biosynthesis. Functionally, cell wall formation. Catalyzes the transfer of a GlcNAc subunit on undecaprenyl-pyrophosphoryl-MurNAc-pentapeptide (lipid intermediate I) to form undecaprenyl-pyrophosphoryl-MurNAc-(pentapeptide)GlcNAc (lipid intermediate II). The protein is UDP-N-acetylglucosamine--N-acetylmuramyl-(pentapeptide) pyrophosphoryl-undecaprenol N-acetylglucosamine transferase of Aliivibrio salmonicida (strain LFI1238) (Vibrio salmonicida (strain LFI1238)).